The chain runs to 403 residues: Acetylornithine aminotransferase (403 aa).

Pyridoxal 5'-phosphate is bound by residues 101 to 102 and Phe-134; that span reads GA. Arg-137 provides a ligand contact to N(2)-acetyl-L-ornithine. 219 to 222 provides a ligand contact to pyridoxal 5'-phosphate; the sequence is DEVQ. At Lys-248 the chain carries N6-(pyridoxal phosphate)lysine. Thr-276 serves as a coordination point for N(2)-acetyl-L-ornithine. Thr-277 provides a ligand contact to pyridoxal 5'-phosphate.

This sequence belongs to the class-III pyridoxal-phosphate-dependent aminotransferase family. ArgD subfamily. In terms of assembly, homodimer. Pyridoxal 5'-phosphate is required as a cofactor.

The protein localises to the cytoplasm. It carries out the reaction N(2)-acetyl-L-ornithine + 2-oxoglutarate = N-acetyl-L-glutamate 5-semialdehyde + L-glutamate. Its pathway is amino-acid biosynthesis; L-arginine biosynthesis; N(2)-acetyl-L-ornithine from L-glutamate: step 4/4. The chain is Acetylornithine aminotransferase from Brucella melitensis biotype 1 (strain ATCC 23456 / CCUG 17765 / NCTC 10094 / 16M).